A 232-amino-acid polypeptide reads, in one-letter code: Peroxiredoxin (232 aa).

The Thioredoxin domain occupies P6–I161. Catalysis depends on C48, which acts as the Cysteine sulfenic acid (-SOH) intermediate. Position 124 (R124) interacts with substrate. A disulfide bridge connects residues C203 and C209.

Belongs to the peroxiredoxin family. Prx6 subfamily. As to quaternary structure, homodecamer. Pentamer of dimers that assemble into a ring structure.

It localises to the cytoplasm. It catalyses the reaction a hydroperoxide + [thioredoxin]-dithiol = an alcohol + [thioredoxin]-disulfide + H2O. Its function is as follows. Thiol-specific peroxidase that catalyzes the reduction of hydrogen peroxide and organic hydroperoxides to water and alcohols, respectively. Plays a role in cell protection against oxidative stress by detoxifying peroxides. The sequence is that of Peroxiredoxin from Hyperthermus butylicus (strain DSM 5456 / JCM 9403 / PLM1-5).